We begin with the raw amino-acid sequence, 1450 residues long: Phospholipase B1, membrane-associated (1450 aa).

A signal peptide spans 1-27 (MESWPGVSLVGLLLLLLLGQGPSQIHG). Residues 28-1422 (SSGENTSQPQ…KAKENSNTLY (1395 aa)) lie on the Extracellular side of the membrane. Residues asparagine 32, asparagine 45, and asparagine 179 are each glycosylated (N-linked (GlcNAc...) asparagine). 3 tandem repeats follow at residues 41–351 (RTLK…YRNS), 366–711 (MKEG…TKNS), and 712–1058 (NLGH…FRNS). The interval 41–1407 (RTLKNFSFPC…NPFLYTVRNS (1367 aa)) is 4 X 308-326 AA approximate repeats. Residues serine 404, aspartate 518, and histidine 659 contribute to the active site. The N-linked (GlcNAc...) asparagine glycan is linked to asparagine 699. A compositionally biased stretch (polar residues) spans 708–720 (TKNSNLGHGTSMS). The segment at 708–734 (TKNSNLGHGTSMSCEEKAPSASPPTSV) is disordered. 10 N-linked (GlcNAc...) asparagine glycosylation sites follow: asparagine 787, asparagine 801, asparagine 844, asparagine 880, asparagine 926, asparagine 1059, asparagine 1226, asparagine 1280, asparagine 1383, and asparagine 1387. Copy 4 of the repeat occupies 1068–1407 (IENWGSDFLC…NPFLYTVRNS (340 aa)). Residues 1408-1450 (QILLDKAKENSNTLYWAVPVAAVGGLVVGILGMMLWRTVRLVQ) form a necessary for membrane localization region. A helical transmembrane segment spans residues 1423–1443 (WAVPVAAVGGLVVGILGMMLW). Residues 1444–1450 (RTVRLVQ) lie on the Cytoplasmic side of the membrane.

The protein belongs to the 'GDSL' lipolytic enzyme family. Phospholipase B1 subfamily. Post-translationally, undergoes proteolytic cleavage in the ileum. As to expression, expressed in the ileum mucosa, Paneth cells spermatocytes, spermatids and sperm (at protein level). Expressed in the ileum, jejunum, esophagus and testis.

Its subcellular location is the apical cell membrane. It catalyses the reaction a 1,2-diacyl-sn-glycero-3-phosphocholine + H2O = a 1-acyl-sn-glycero-3-phosphocholine + a fatty acid + H(+). It carries out the reaction a 1-O-alkyl-2-acyl-sn-glycero-3-phosphocholine + H2O = a 1-O-alkyl-sn-glycero-3-phosphocholine + a fatty acid + H(+). The enzyme catalyses a 1-acyl-sn-glycero-3-phosphocholine + H2O = sn-glycerol 3-phosphocholine + a fatty acid + H(+). The catalysed reaction is a triacylglycerol + H2O = a diacylglycerol + a fatty acid + H(+). It catalyses the reaction 1,2-dihexadecanoyl-sn-glycero-3-phosphocholine + H2O = 1-hexadecanoyl-sn-glycero-3-phosphocholine + hexadecanoate + H(+). It carries out the reaction 1-hexadecanoyl-2-(9Z-octadecenoyl)-sn-glycero-3-phosphocholine + H2O = 1-hexadecanoyl-sn-glycero-3-phosphocholine + (9Z)-octadecenoate + H(+). The enzyme catalyses 1,2-di-(9Z-octadecenoyl)-sn-glycero-3-phosphocholine + H2O = 1-(9Z-octadecenoyl)-sn-glycero-3-phosphocholine + (9Z)-octadecenoate + H(+). The catalysed reaction is 1-hexadecanoyl-2-(9Z,12Z-octadecadienoyl)-sn-glycero-3-phosphocholine + H2O = (9Z,12Z)-octadecadienoate + 1-hexadecanoyl-sn-glycero-3-phosphocholine + H(+). It catalyses the reaction 1-hexadecanoyl-2-(9Z,12Z-octadecadienoyl)-sn-glycero-3-phosphocholine + H2O = 2-(9Z,12Z-octadecadienoyl)-sn-glycero-3-phosphocholine + hexadecanoate + H(+). It carries out the reaction 1-hexadecanoyl-2-(9Z-octadecenoyl)-sn-glycero-3-phosphoethanolamine + H2O = 1-hexadecanoyl-sn-glycero-3-phosphoethanolamine + (9Z)-octadecenoate + H(+). The enzyme catalyses 1-hexadecanoyl-2-(9Z-octadecenoyl)-sn-glycero-3-phospho-(1'-sn-glycerol) + H2O = 1-hexadecanoyl-sn-glycero-3-phospho-(1'-sn-glycerol) + (9Z)-octadecenoate + H(+). The catalysed reaction is 1,2-dihexadecanoyl-sn-glycero-3-phosphocholine + 2 H2O = sn-glycerol 3-phosphocholine + 2 hexadecanoate + 2 H(+). It catalyses the reaction 1-O-hexadecyl-2-(9Z)-octadecenoyl-sn-glycero-3-phosphocholine + H2O = 1-O-hexadecyl-sn-glycero-3-phosphocholine + (9Z)-octadecenoate + H(+). It carries out the reaction 1-hexadecanoyl-sn-glycero-3-phosphocholine + H2O = sn-glycerol 3-phosphocholine + hexadecanoate + H(+). The enzyme catalyses 1,2,3-tri-(9Z-octadecenoyl)-glycerol + H2O = di-(9Z)-octadecenoylglycerol + (9Z)-octadecenoate + H(+). The catalysed reaction is 1-hexadecanoyl-2-(9Z)-octadecenoyl-3-octadecanoyl-sn-glycerol + H2O = 1-hexadecanoyl-2-(9Z-octadecenoyl)-sn-glycerol + octadecanoate + H(+). It catalyses the reaction 1,3-dihexadecanoyl-2-(9Z-octadecenoyl)glycerol + H2O = 1,3-dihexadecanoylglycerol + (9Z)-octadecenoate + H(+). It carries out the reaction 1,3-dihexadecanoyl-2-(9Z-octadecenoyl)glycerol + H2O = 1-hexadecanoyl-2-(9Z-octadecenoyl)-glycerol + hexadecanoate + H(+). The enzyme catalyses 1-hexadecanoyl-2-(9Z)-octadecenoyl-3-octadecanoyl-sn-glycerol + H2O = 1-hexadecanoyl-3-octadecanoyl-sn-glycerol + (9Z)-octadecenoate + H(+). The catalysed reaction is 1-hexadecanoyl-2-(9Z)-octadecenoyl-3-octadecanoyl-sn-glycerol + H2O = 2-(9Z-octadecenoyl)-3-octadecanoyl-sn-glycerol + hexadecanoate + H(+). It catalyses the reaction 1-octadecanoyl-2-(9Z,12Z)-octadecadienoyl-sn-glycerol + H2O = 1-octadecanoyl-sn-glycerol + (9Z,12Z)-octadecadienoate + H(+). It carries out the reaction 1,2-di-(9Z-octadecenoyl)-sn-glycerol + H2O = 1-(9Z-octadecenoyl)-sn-glycerol + (9Z)-octadecenoate + H(+). The enzyme catalyses 2,3-di-(9Z)-octadecenoyl-sn-glycerol + H2O = 3-(9Z-octadecenoyl)-sn-glycerol + (9Z)-octadecenoate + H(+). The catalysed reaction is 1,3-di-(9Z-octadecenoyl)-glycerol + H2O = 1-(9Z-octadecenoyl)-glycerol + (9Z)-octadecenoate + H(+). It catalyses the reaction 1-(9Z-octadecenoyl)-glycerol + H2O = glycerol + (9Z)-octadecenoate + H(+). It carries out the reaction 2-(9Z-octadecenoyl)-glycerol + H2O = glycerol + (9Z)-octadecenoate + H(+). Its activity is regulated as follows. Up-regulated by bile acids such as deoxycholate. Inhibited by diisopropyl fluorophosphate. Calcium-independent membrane-associated phospholipase that catalyzes complete diacylation of phospholipids by hydrolyzing both sn-1 and sn-2 fatty acyl chains attached to the glycerol backbone (phospholipase B activity). Has dual phospholipase and lysophospholipase activities toward diacylphospholipids. Preferentially cleaves sn-2 ester bonds over sn-1 bonds. Acts as a lipase toward glycerolipid substrates. Hydrolyzes fatty acyl chains of diacylglycerols with preference for the sn-2 position and of triacylglycerols with not positional selectivity. May also hydrolyze long chain retinyl esters such as retinyl palmitate. May contribute to digestion of dietary phospholipids, glycerolipids and retinoids, facilitating lipid absorption at the brush border. The protein is Phospholipase B1, membrane-associated (Plb1) of Rattus norvegicus (Rat).